The sequence spans 275 residues: MLLSRFTSVFPRNVIVRGVSTLTSHVDRNYLVRSSFDKCQRFPFSDSKQEAEDVKKKCEEAAAKKKCAEAAKKEKEAAEKKKCAEAAKKEKEAAEKKKCAEAAKKEQEAAQKKKCAELAKKEKEAAEKKKCAEAAKKEKEAAERKKCEEAAFKQKCEEAAKKKKEAKKAAELQQKCAALAKKEKEAEMMKKCEEAAKKKAAEEAAKKKAEEVAAKKKADEAAAKKKCAEAKKKAEEAALKKMCEEAALKKMCEEAALQKKCAEAAKNAKKTDSET.

Tandem repeats lie at residues 64-79, 80-95, 96-111, 112-127, 128-143, 144-159, 160-175, 181-196, 197-212, 215-230, 231-246, and 249-264. The interval 64–264 is 12 X 16 AA tandem repeats of [KRA]-K-[KEM]-[CKA]-[AEKD]-[EA]-[ALE]-[AMK]-[FKAML]-[KQA]-[EQKA]-[KQCEM]-[ECLA]-[AEQ]-[AEQ]-[EQAKV]; sequence KKKCAEAAKK…AALQKKCAEA (201 aa).

In terms of tissue distribution, testis.

The protein resides in the cytoplasm. Possible structural role in the sperm tail. In Drosophila hydei (Fruit fly), this protein is Axoneme-associated protein mst101(3) (mst101(3)).